The primary structure comprises 137 residues: Phosphomevalonate dehydratase small subunit (137 aa).

Ser-65 (proton acceptor) is an active-site residue.

This sequence belongs to the AcnX type II small subunit family. Heterodimer composed of a large subunit (PMDh-L) and a small subunit (PMDh-S).

It catalyses the reaction (R)-5-phosphomevalonate = (2E)-3-methyl-5-phosphooxypent-2-enoate + H2O. The protein operates within isoprenoid biosynthesis; isopentenyl diphosphate biosynthesis via mevalonate pathway. Functionally, component of a hydro-lyase that catalyzes the dehydration of mevalonate 5-phosphate (MVA5P) to form trans-anhydromevalonate 5-phosphate (tAHMP). Involved in the archaeal mevalonate (MVA) pathway, which provides fundamental precursors for isoprenoid biosynthesis, such as isopentenyl diphosphate (IPP) and dimethylallyl diphosphate (DMAPP). This chain is Phosphomevalonate dehydratase small subunit, found in Methanococcoides burtonii (strain DSM 6242 / NBRC 107633 / OCM 468 / ACE-M).